The sequence spans 230 residues: ATP-dependent dethiobiotin synthetase BioD (230 aa).

12–17 serves as a coordination point for ATP; that stretch reads DIGKTH. Thr16 is a binding site for Mg(2+). Lys37 is a catalytic residue. Substrate is bound at residue Ser41. Residues Asp52, 115–118, and 175–176 each bind ATP; these read EGAG and SE. Mg(2+)-binding residues include Asp52 and Glu115.

The protein belongs to the dethiobiotin synthetase family. Homodimer. The cofactor is Mg(2+).

Its subcellular location is the cytoplasm. It catalyses the reaction (7R,8S)-7,8-diammoniononanoate + CO2 + ATP = (4R,5S)-dethiobiotin + ADP + phosphate + 3 H(+). It participates in cofactor biosynthesis; biotin biosynthesis; biotin from 7,8-diaminononanoate: step 1/2. In terms of biological role, catalyzes a mechanistically unusual reaction, the ATP-dependent insertion of CO2 between the N7 and N8 nitrogen atoms of 7,8-diaminopelargonic acid (DAPA, also called 7,8-diammoniononanoate) to form a ureido ring. The chain is ATP-dependent dethiobiotin synthetase BioD from Caulobacter sp. (strain K31).